The primary structure comprises 312 residues: Aspartate carbamoyltransferase catalytic subunit (312 aa).

R58 and T59 together coordinate carbamoyl phosphate. K86 is an L-aspartate binding site. Residues R108, H136, and Q139 each contribute to the carbamoyl phosphate site. L-aspartate-binding residues include R169 and R223. Positions 264 and 265 each coordinate carbamoyl phosphate.

Belongs to the aspartate/ornithine carbamoyltransferase superfamily. ATCase family. As to quaternary structure, heterododecamer (2C3:3R2) of six catalytic PyrB chains organized as two trimers (C3), and six regulatory PyrI chains organized as three dimers (R2).

It carries out the reaction carbamoyl phosphate + L-aspartate = N-carbamoyl-L-aspartate + phosphate + H(+). It participates in pyrimidine metabolism; UMP biosynthesis via de novo pathway; (S)-dihydroorotate from bicarbonate: step 2/3. In terms of biological role, catalyzes the condensation of carbamoyl phosphate and aspartate to form carbamoyl aspartate and inorganic phosphate, the committed step in the de novo pyrimidine nucleotide biosynthesis pathway. The polypeptide is Aspartate carbamoyltransferase catalytic subunit (Acetivibrio thermocellus (strain ATCC 27405 / DSM 1237 / JCM 9322 / NBRC 103400 / NCIMB 10682 / NRRL B-4536 / VPI 7372) (Clostridium thermocellum)).